The following is a 2897-amino-acid chain: Chromodomain-helicase-DNA-binding protein 9 (2897 aa).

The span at 173-201 (QCTSLRSQQNRNNLNPGQNSLSQSKNFMN) shows a compositional bias: polar residues. Disordered regions lie at residues 173-265 (QCTS…CSVS), 482-525 (QRQP…KQEK), and 537-671 (AKER…SAPL). A Glycyl lysine isopeptide (Lys-Gly) (interchain with G-Cter in SUMO2) cross-link involves residue Lys-197. Residues 220–235 (SNSQQSISMQQFSQTS) are compositionally biased toward low complexity. Composition is skewed to polar residues over residues 247–260 (HQEGNFNGPSPNMT) and 484–506 (QPPSSKKSDGSGTYTKLQNTQVR). N6-acetyllysine is present on Lys-499. A compositionally biased stretch (basic and acidic residues) spans 508–525 (MSEKKQRKKVESESKQEK). Ser-550 bears the Phosphoserine mark. Positions 573–593 (KPKDKDSKKTKTCSKLKEKTK) are enriched in basic and acidic residues. A Glycyl lysine isopeptide (Lys-Gly) (interchain with G-Cter in SUMO2) cross-link involves residue Lys-596. Ser-611 is modified (phosphoserine). Basic residues predominate over residues 634–644 (RRSNRQIKRKK). A compositionally biased stretch (basic and acidic residues) spans 645-660 (YAEDIEGKQSEEEVKG). Chromo domains lie at 690 to 761 (AIVD…HFFA) and 773 to 839 (VEVD…RLDR). An LXXLL motif 1 motif is present at residues 868–872 (LNWLL). The region spanning 872–1046 (LFNWYNRRNC…FSLLHFLEPL (175 aa)) is the Helicase ATP-binding domain. 885-892 (DEMGLGKT) serves as a coordination point for ATP. The short motif at 997–1000 (DEAH) is the DEAH box element. Residues 1036–1040 (LFSLL) carry the LXXLL motif 2 motif. The region spanning 1186–1337 (LIDKLLPKMK…KAVLQSMSGR (152 aa)) is the Helicase C-terminal domain. Residues 1461-1484 (KDELAELSEAESEGDEKPKLRRPC) form a disordered region. The segment covering 1465–1474 (AELSEAESEG) has biased composition (acidic residues). A phosphoserine mark is found at Ser-1468 and Ser-1472. The span at 1475-1484 (DEKPKLRRPC) shows a compositional bias: basic and acidic residues. Glycyl lysine isopeptide (Lys-Gly) (interchain with G-Cter in SUMO2) cross-links involve residues Lys-1588, Lys-1738, and Lys-1903. Phosphoserine is present on Ser-2026. An LXXLL motif 3 motif is present at residues 2031-2035 (LPRLL). A Glycyl lysine isopeptide (Lys-Gly) (interchain with G-Cter in SUMO2) cross-link involves residue Lys-2038. Disordered regions lie at residues 2050 to 2238 (ENLK…QMNN) and 2305 to 2337 (GAATEYSDPSVPTPPGAGVKEEHDQSTQMSKVK). 2 positions are modified to phosphoserine: Ser-2058 and Ser-2059. Lys-2074 is covalently cross-linked (Glycyl lysine isopeptide (Lys-Gly) (interchain with G-Cter in SUMO2)). Residues Ser-2075 and Ser-2079 each carry the phosphoserine modification. Positions 2094 to 2104 (SGGKCETDRRM) are enriched in basic and acidic residues. Low complexity predominate over residues 2141–2193 (SSCSSRSSSSSSSSSCSHSRSGSSSSSSSSCSSASSSSSSSTSSSSSSSSSSS). Residues 2203–2216 (AQKRESTTHMKAYD) show a composition bias toward basic and acidic residues. Positions 2221–2238 (ASLSTTQDETQDSFQMNN) are enriched in polar residues. Residues 2332 to 2481 (QMSKVKKHVR…LSYTQPQGIP (150 aa)) are binds A/T-rich DNA. Residues Lys-2350, Lys-2356, and Lys-2361 each participate in a glycyl lysine isopeptide (Lys-Gly) (interchain with G-Cter in SUMO2) cross-link. Positions 2429 to 2436 (KKRRGRRK) are a.T hook-like. The LXXLL motif 4 signature appears at 2721-2725 (LPNLL). Positions 2729–2777 (GLLTKPTESGTEDKKGSDSKESEGKTERTESQSSENGGENSVSSSPSTS) are disordered. Basic and acidic residues predominate over residues 2739-2758 (TEDKKGSDSKESEGKTERTE). A compositionally biased stretch (low complexity) spans 2759-2777 (SQSSENGGENSVSSSPSTS). Positions 2793–2797 (LNPLL) match the LXXLL motif 5 motif. A disordered region spans residues 2827 to 2897 (VQNKNSDLGS…SEDSDSSNED (71 aa)). Residues 2840 to 2857 (VEVKEEDSRIKDQEDKGG) are compositionally biased toward basic and acidic residues. A Glycyl lysine isopeptide (Lys-Gly) (interchain with G-Cter in SUMO2) cross-link involves residue Lys-2843. A compositionally biased stretch (low complexity) spans 2877–2888 (ASSGSDSTSSSS).

It belongs to the SNF2/RAD54 helicase family. As to quaternary structure, interacts with PPARA. Probably interacts with ESR1 and NR1I3. In terms of processing, phosphorylated on serine and tyrosine residues. Widely expressed at low levels. In bone marrow, expression is restricted to osteoprogenitor cells adjacent to mature osteoblasts.

Its subcellular location is the cytoplasm. The protein localises to the nucleus. The catalysed reaction is ATP + H2O = ADP + phosphate + H(+). Probable ATP-dependent chromatin-remodeling factor. Acts as a transcriptional coactivator for PPARA and possibly other nuclear receptors. Has DNA-dependent ATPase activity and binds to A/T-rich DNA. Associates with A/T-rich regulatory regions in promoters of genes that participate in the differentiation of progenitors during osteogenesis. In Homo sapiens (Human), this protein is Chromodomain-helicase-DNA-binding protein 9 (CHD9).